Consider the following 599-residue polypeptide: Peptidyl-Asp metalloendopeptidase (599 aa).

The N-terminal stretch at 1 to 20 (MKKSLLCSTLALAVASAAQA) is a signal peptide. H164 lines the Zn(2+) pocket. Residue E165 is part of the active site. Zn(2+) is bound by residues H168 and H174. Residues 265-285 (PTKVPGTVNPGSGGDTPTPPD) form a disordered region. The region spanning 458–583 (YDFESGIGGW…KRAELMILSG (126 aa)) is the CBM-cenC domain.

The protein belongs to the peptidase M72 family. Interacts with BamI, the product of its coregulated adjacent gene, which inhibits its protease activity. Zn(2+) serves as cofactor. Post-translationally, made as a membrane-associated pre-pro-protein, which is exported to the periplasm with removal of the signal peptide, leading to a protein with a molecular mass of 65 kDa, that likely contains the metzincin domain plus tandem carbohydrate-binding domains. Undergoes processing during export to the extracellular milieu, probably by autocatalysis, yielding a (mature length) 25 kDa protein that most likely corresponds to the metzincin domain only.

It localises to the secreted. The enzyme catalyses Cleavage of Xaa-|-Asp, Xaa-|-Glu and Xaa-|-cysteic acid bonds.. Its activity is regulated as follows. Is inhibited by BamI, the product of its coregulated adjacent gene. Functionally, metalloprotease with endopeptidase activity. Specifically cleaves on the N-terminal side of aspartyl, glutamyl and cysteic acid residues. Mep72 appears to be a secreted biofilm-specific regulator that affects the processing of a very specific subset of virulence factors exported by the type III secretion machinery as well as flagellar proteins. Binds directly to ExoS and PcrV and affects the processing of these proteins in the biofilm secretome, but contrary to expectation, Mep72 seems to protect these targets against proteolytic processing/degradation. This chain is Peptidyl-Asp metalloendopeptidase, found in Pseudomonas aeruginosa (strain ATCC 15692 / DSM 22644 / CIP 104116 / JCM 14847 / LMG 12228 / 1C / PRS 101 / PAO1).